Reading from the N-terminus, the 660-residue chain is Dual specificity mitogen-activated protein kinase kinase 1 (660 aa).

A compositionally biased stretch (low complexity) spans 1–57; the sequence is MNTNTNTNTNISSSGNNIINTPTTNNNNKNNNNNNNNNNNSNNSNNNSSNNNNNNNN. Disordered regions lie at residues 1 to 60, 105 to 169, and 204 to 229; these read MNTN…NAVG, KGES…FNNL, and NNNY…SNNN. Residue K105 forms a Glycyl lysine isopeptide (Lys-Gly) (interchain with G-Cter in SUMO) linkage. Residues 123-148 are compositionally biased toward polar residues; that stretch reads LHSNLNPQLLASPTSSESMDFNQGFY. A compositionally biased stretch (low complexity) spans 149-169; sequence NNNNNNNNNNNNNNLNNFNNL. The region spanning 292–641 is the Protein kinase domain; the sequence is LKIIRVLGRG…ASNLLNHEFV (350 aa). ATP contacts are provided by residues 298 to 306 and K321; that span reads LGRGAGGVV. D414 (proton acceptor) is an active-site residue. Disordered stretches follow at residues 491-510 and 539-573; these read SNLP…QQQQ and NNSN…VLDI. Low complexity-rich tracts occupy residues 496–510 and 539–569; these read QQQQ…QQQQ and NNSN…NNNN.

This sequence belongs to the protein kinase superfamily. STE Ser/Thr protein kinase family. MAP kinase kinase subfamily. As to quaternary structure, interacts with mip1. It depends on Mg(2+) as a cofactor. Sumoylated and ubiquitinated in response to chemoattractant stimulation. Sumoylation is linked to kinase activation and results in translocation.

The protein localises to the cytoplasm. It localises to the nucleus. The catalysed reaction is L-seryl-[protein] + ATP = O-phospho-L-seryl-[protein] + ADP + H(+). It catalyses the reaction L-threonyl-[protein] + ATP = O-phospho-L-threonyl-[protein] + ADP + H(+). It carries out the reaction L-tyrosyl-[protein] + ATP = O-phospho-L-tyrosyl-[protein] + ADP + H(+). In terms of biological role, required for cAMP-mediated activation of guanylyl cyclase activity and plays an essential role in aggregation, morphogenesis, and chemotaxis. Appears to act upstream of erk1 but not erk2. In Dictyostelium discoideum (Social amoeba), this protein is Dual specificity mitogen-activated protein kinase kinase 1.